The primary structure comprises 280 residues: Probable endonuclease 4 (280 aa).

Positions 69, 109, 145, 179, 182, 216, 229, 231, and 261 each coordinate Zn(2+).

This sequence belongs to the AP endonuclease 2 family. It depends on Zn(2+) as a cofactor.

The enzyme catalyses Endonucleolytic cleavage to 5'-phosphooligonucleotide end-products.. Its function is as follows. Endonuclease IV plays a role in DNA repair. It cleaves phosphodiester bonds at apurinic or apyrimidinic (AP) sites, generating a 3'-hydroxyl group and a 5'-terminal sugar phosphate. The polypeptide is Probable endonuclease 4 (Aliarcobacter butzleri (strain RM4018) (Arcobacter butzleri)).